The following is a 475-amino-acid chain: Ribulose bisphosphate carboxylase large chain (475 aa).

Residues 1–2 (MS) constitute a propeptide that is removed on maturation. Residue Pro-3 is modified to N-acetylproline. An N6,N6,N6-trimethyllysine modification is found at Lys-14. Positions 123 and 173 each coordinate substrate. Lys-175 acts as the Proton acceptor in catalysis. Lys-177 contributes to the substrate binding site. Positions 201, 203, and 204 each coordinate Mg(2+). Residue Lys-201 is modified to N6-carboxylysine. His-294 acts as the Proton acceptor in catalysis. 3 residues coordinate substrate: Arg-295, His-327, and Ser-379.

This sequence belongs to the RuBisCO large chain family. Type I subfamily. Heterohexadecamer of 8 large chains and 8 small chains; disulfide-linked. The disulfide link is formed within the large subunit homodimers. Requires Mg(2+) as cofactor. In terms of processing, the disulfide bond which can form in the large chain dimeric partners within the hexadecamer appears to be associated with oxidative stress and protein turnover.

It is found in the plastid. It localises to the chloroplast. The enzyme catalyses 2 (2R)-3-phosphoglycerate + 2 H(+) = D-ribulose 1,5-bisphosphate + CO2 + H2O. The catalysed reaction is D-ribulose 1,5-bisphosphate + O2 = 2-phosphoglycolate + (2R)-3-phosphoglycerate + 2 H(+). Its function is as follows. RuBisCO catalyzes two reactions: the carboxylation of D-ribulose 1,5-bisphosphate, the primary event in carbon dioxide fixation, as well as the oxidative fragmentation of the pentose substrate in the photorespiration process. Both reactions occur simultaneously and in competition at the same active site. This chain is Ribulose bisphosphate carboxylase large chain, found in Picea sitchensis (Sitka spruce).